The chain runs to 152 residues: ADP-ribose glycohydrolase OARD1 (152 aa).

Position 2 is an N-acetylalanine (Ala2). The 151-residue stretch at 2–152 folds into the Macro domain; it reads AGSPNEDSEG…TDIRITVYTL (151 aa). Ser4 is subject to Phosphoserine. Residue Leu21 coordinates substrate. Lys84 functions as the Nucleophile in the catalytic mechanism. Substrate is bound by residues 119–125 and Leu152; that span reads RIGCGLD. Catalysis depends on Asp125, which acts as the Proton acceptor.

The protein resides in the nucleus. Its subcellular location is the nucleoplasm. It localises to the nucleolus. The protein localises to the chromosome. It carries out the reaction 2''-O-acetyl-ADP-D-ribose + H2O = ADP-D-ribose + acetate + H(+). The catalysed reaction is 5-O-(ADP-D-ribosyl)-L-glutamyl-[protein] + H2O = L-glutamyl-[protein] + ADP-D-ribose + H(+). The enzyme catalyses alpha-NAD(+) + H2O = ADP-D-ribose + nicotinamide + H(+). Its activity is regulated as follows. Subject to competitive inhibition by the product ADP-ribose. In terms of biological role, ADP-ribose glycohydrolase that hydrolyzes ADP-ribose and acts on different substrates, such as proteins ADP-ribosylated on glutamate and O-acetyl-ADP-D-ribose. Specifically acts as a glutamate mono-ADP-ribosylhydrolase by mediating the removal of mono-ADP-ribose attached to glutamate residues on proteins. Does not act on poly-ADP-ribosylated proteins: the poly-ADP-ribose chain of poly-ADP-ribosylated glutamate residues must by hydrolyzed into mono-ADP-ribosylated glutamate by PARG to become a substrate for OARD1. Deacetylates O-acetyl-ADP ribose, a signaling molecule generated by the deacetylation of acetylated lysine residues in histones and other proteins. Catalyzes the deacylation of O-acetyl-ADP-ribose, O-propionyl-ADP-ribose and O-butyryl-ADP-ribose, yielding ADP-ribose plus acetate, propionate and butyrate, respectively. In Bos taurus (Bovine), this protein is ADP-ribose glycohydrolase OARD1.